The sequence spans 89 residues: MSVTAERKAQIIKEFATVEGDTGSPEVQVAILTERINNLTEHFKDHKKDNHSRRGLLALVSSRRSLLDYLKKKDEARYTKLIGALGIRR.

It belongs to the universal ribosomal protein uS15 family. As to quaternary structure, part of the 30S ribosomal subunit. Forms a bridge to the 50S subunit in the 70S ribosome, contacting the 23S rRNA.

Its function is as follows. One of the primary rRNA binding proteins, it binds directly to 16S rRNA where it helps nucleate assembly of the platform of the 30S subunit by binding and bridging several RNA helices of the 16S rRNA. In terms of biological role, forms an intersubunit bridge (bridge B4) with the 23S rRNA of the 50S subunit in the ribosome. This Rhizobium meliloti (strain 1021) (Ensifer meliloti) protein is Small ribosomal subunit protein uS15.